The following is a 372-amino-acid chain: Alanine racemase (372 aa).

The active-site Proton acceptor; specific for D-alanine is Lys-48. Position 48 is an N6-(pyridoxal phosphate)lysine (Lys-48). Arg-143 contacts substrate. The active-site Proton acceptor; specific for L-alanine is the Tyr-268. Met-316 contributes to the substrate binding site.

Belongs to the alanine racemase family. The cofactor is pyridoxal 5'-phosphate.

The enzyme catalyses L-alanine = D-alanine. It participates in amino-acid biosynthesis; D-alanine biosynthesis; D-alanine from L-alanine: step 1/1. Functionally, catalyzes the interconversion of L-alanine and D-alanine. May also act on other amino acids. The sequence is that of Alanine racemase (alr) from Vibrio vulnificus (strain YJ016).